The chain runs to 310 residues: Melanocyte-stimulating hormone receptor (310 aa).

At 1–37 (MPMQGAQRKLLGSLNSTPTATSNLGLAANRTGAPCLE) the chain is on the extracellular side. N29 carries an N-linked (GlcNAc...) asparagine glycan. Residues 38-63 (LPIPDGLFLSLGLVSLVENVLVVAAI) traverse the membrane as a helical segment. The Cytoplasmic segment spans residues 64 to 72 (AKNRNLHSS). The helical transmembrane segment at 73–93 (MYCFICCLALSDLLVSGSNML) threads the bilayer. Residues 94–110 (EAGVLATRASVVQQLHN) lie on the Extracellular side of the membrane. The chain crosses the membrane as a helical span at residues 111–132 (TIDVLTCSSMLCSLCFLGAIAV). Residues 133-155 (DRYISIFYALRYHSIMTLPRAQR) lie on the Cytoplasmic side of the membrane. Residues 156–175 (AVAAIWVASVLSSTLFITYY) traverse the membrane as a helical segment. The Extracellular segment spans residues 176–183 (DHAAVLLC). A helical transmembrane segment spans residues 184–203 (LVVFFLAMLVLMAVLYVHML). Over 204 to 232 (AWACQHAQGIIRLHKRQPPAHKGFGLRGA) the chain is Cytoplasmic. The chain crosses the membrane as a helical span at residues 233 to 258 (ATLTILLGIFFLCWGPFFLRLTLVVF). The Extracellular portion of the chain corresponds to 259-271 (CPQHLTCNCIFKN). Residues 272-292 (FKVFLTLIICNTIIDPLIYAF) traverse the membrane as a helical segment. Residues 293–310 (RSQELRRTLKEVLGRGRW) lie on the Cytoplasmic side of the membrane.

Belongs to the G-protein coupled receptor 1 family. As to quaternary structure, interacts with MGRN1, but does not undergo MGRN1-mediated ubiquitination; this interaction competes with GNAS-binding and thus inhibits agonist-induced cAMP production. Interacts with OPN3; the interaction results in a decrease in MC1R-mediated cAMP signaling and ultimately a decrease in melanin production in melanocytes.

Its subcellular location is the cell membrane. Receptor for MSH (alpha, beta and gamma) and ACTH. The activity of this receptor is mediated by G proteins which activate adenylate cyclase. Mediates melanogenesis, the production of eumelanin (black/brown) and phaeomelanin (red/yellow), via regulation of cAMP signaling in melanocytes. The protein is Melanocyte-stimulating hormone receptor (MC1R) of Leontopithecus chrysomelas (Golden-headed lion tamarin).